The sequence spans 73 residues: Translational regulator CsrA (73 aa).

The protein belongs to the CsrA/RsmA family. In terms of assembly, homodimer; the beta-strands of each monomer intercalate to form a hydrophobic core, while the alpha-helices form wings that extend away from the core.

It localises to the cytoplasm. A translational regulator that binds mRNA to regulate translation initiation and/or mRNA stability. Usually binds in the 5'-UTR at or near the Shine-Dalgarno sequence preventing ribosome-binding, thus repressing translation. Its main target seems to be the major flagellin gene, while its function is anatagonized by FliW. In Thermosipho africanus (strain TCF52B), this protein is Translational regulator CsrA.